We begin with the raw amino-acid sequence, 132 residues long: Tumor suppressor ARF (132 aa).

Residues 1–64 (MVRRFLVTLR…LGQQPLPRRP (64 aa)) are interaction with CDK5RAP3 and MDM2. The disordered stretch occupies residues 56–132 (GQQPLPRRPG…CLGPSARGPG (77 aa)). Positions 71 to 83 (RPSGGAAAAPRRG) are enriched in low complexity. The span at 84-99 (AQLRRPRHSHPTRARR) shows a compositional bias: basic residues. Residues 103–117 (GLPGHAGGAAPGRGA) are compositionally biased toward gly residues.

As to quaternary structure, does not interact with cyclins, CDK1, CDK2, CDK4, CDK5 or CDK6. Binds to BCL6, E2F1, HUWE1, MDM2, MYC, NPM1/B23, TOP1/TOPOI and UBE2I/UBC9. Interacts with TBRG1 and COMMD1. Interacts with CDKN2AIP and E4F1. Interacts with CDK5RAP3 and MDM2; form a ternary complex involved in regulation of p53/TP53. Interacts with NOP53; the interaction is direct and promotes ARF nucleoplasmic relocalization and ubiquitin-mediated proteasomal degradation. Interacts with TTF1 (via the N-terminal region (NRD) and a C-terminal region); the interaction is direct and inhibits the nucleolar localization of TTF1. In terms of assembly, interacts with C1QBP. In terms of processing, ubiquitinated in normal cells by TRIP12 via the ubiquitin fusion degradation (UFD) pathway, a process that mediates ubiquitination at the N-terminus, regardless of the absence of lysine residues. Ubiquitination leads to its proteasomal degradation. In cancer cells, however, TRIP12 is located in a different cell compartment, preventing ubiquitination and degradation.

The protein resides in the nucleus. It localises to the nucleolus. Its subcellular location is the nucleoplasm. The protein localises to the mitochondrion. Functionally, capable of inducing cell cycle arrest in G1 and G2 phases. Acts as a tumor suppressor. Binds to MDM2 and blocks its nucleocytoplasmic shuttling by sequestering it in the nucleolus. This inhibits the oncogenic action of MDM2 by blocking MDM2-induced degradation of p53 and enhancing p53-dependent transactivation and apoptosis. Also induces G2 arrest and apoptosis in a p53-independent manner by preventing the activation of cyclin B1/CDC2 complexes. Binds to BCL6 and down-regulates BCL6-induced transcriptional repression. Binds to E2F1 and MYC and blocks their transcriptional activator activity but has no effect on MYC transcriptional repression. Binds to TOP1/TOPOI and stimulates its activity. This complex binds to rRNA gene promoters and may play a role in rRNA transcription and/or maturation. Interacts with NPM1/B23 and promotes its polyubiquitination and degradation, thus inhibiting rRNA processing. Plays a role in inhibiting ribosome biogenesis, perhaps by binding to the nucleolar localization sequence of transcription termination factor TTF1, and thereby preventing nucleolar localization of TTF1. Interacts with COMMD1 and promotes its 'Lys63'-linked polyubiquitination. Interacts with UBE2I/UBC9 and enhances sumoylation of a number of its binding partners including MDM2 and E2F1. Binds to HUWE1 and represses its ubiquitin ligase activity. May play a role in controlling cell proliferation and apoptosis during mammary gland development. Its function is as follows. May be involved in regulation of autophagy and caspase-independent cell death; the short-lived mitochondrial isoform is stabilized by C1QBP. This is Tumor suppressor ARF from Homo sapiens (Human).